The sequence spans 659 residues: MRFEEEIGSLQMLCDQFQNKINTLEKQMNEEKKDYVQKLHRLHEKNGEAIDKMKQLDHTMQAVSTKVVHLGDQLESVDQPRSRAHDAHQLMQHFDEFLSDQPLNSMIFTDPDKLLESADLVHKLYSISQELNKDKFANVQARIGQRYKVVEDLLIEEFVRSQRDEKKMAEVAKILSEFKGYSGCVDRYVDFLCQSIHPRGDGGEILADCLQLCRTQQPRISAIFPSPHTVMQKLVLNIFTGRMKETITARLRECKDTDDQEHYLRDLAYLYSSTLKMCKELEKLHISPDSAFLSTLTDSIFQRYIATYCSEELKYLNDQCSNLLQRFYESKKHVKKQIGGGLHELKRDVAARLMNVETYGGETFVAEDVAISILQETKNAFGRANQLCDKEELPRHVENIVDVLLKYLYGEHLDYAVETGLAGISLAESKTEPPAYFFSVVAKCTSVILLMIKQFEDPIFPIIKETIVEPSVAKKWQQSLRSLESKMSLGLERQLNSIVGYVKFLFSEQKKTDFRPDSQQIDIRVSPQCQLASRFLANQVAAMELGCDGENLEALQSDLATRLFKFMLTHIQQFTYNSTGAVLLLCDVGELRTLVSKWRVQNALTQWESLQALTNLLAVLPDQVNETAHSSLLENVDRQLIHDFVRLRTDFRSIKNFQI.

The stretch at 1–58 (MRFEEEIGSLQMLCDQFQNKINTLEKQMNEEKKDYVQKLHRLHEKNGEAIDKMKQLDH) forms a coiled coil.

This sequence belongs to the SEC10 family. As to quaternary structure, the exocyst complex is composed of sec-3/exoc1, sec-5/exoc2, sec-6/exoc3, sec-8/exoc4, sec-10/exoc5, sec-15/exoc6, exo-70/exoc7 and exo-84/exoc8.

Functionally, component of the exocyst complex involved in the docking of exocytic vesicles with fusion sites on the plasma membrane. This Caenorhabditis elegans protein is Exocyst complex component 5 (sec-10).